A 351-amino-acid chain; its full sequence is Beta-hexosaminidase (351 aa).

Residues Asp62, Arg70, Arg134, and 164-165 contribute to the substrate site; that span reads KH. The Proton donor/acceptor role is filled by His177. The active-site Nucleophile is Asp249.

It belongs to the glycosyl hydrolase 3 family. NagZ subfamily.

It localises to the cytoplasm. The enzyme catalyses Hydrolysis of terminal non-reducing N-acetyl-D-hexosamine residues in N-acetyl-beta-D-hexosaminides.. It participates in cell wall biogenesis; peptidoglycan recycling. Plays a role in peptidoglycan recycling by cleaving the terminal beta-1,4-linked N-acetylglucosamine (GlcNAc) from peptide-linked peptidoglycan fragments, giving rise to free GlcNAc, anhydro-N-acetylmuramic acid and anhydro-N-acetylmuramic acid-linked peptides. This chain is Beta-hexosaminidase, found in Histophilus somni (strain 129Pt) (Haemophilus somnus).